Consider the following 381-residue polypeptide: Chymosin (381 aa).

The N-terminal stretch at 1 to 16 is a signal peptide; sequence MRCLVVLLAVFALSQG. Positions 17-58 are cleaved as a propeptide — activation peptide; the sequence is AEITRIPLYKGKPLRKALKERGLLEDFLQKQQYGVSSEYSGF. Residues 74–378 form the Peptidase A1 domain; sequence YFGKIYLGTP…DRANNLVGLA (305 aa). Residue aspartate 92 is part of the active site. 2 disulfides stabilise this stretch: cysteine 105-cysteine 110 and cysteine 265-cysteine 269. Aspartate 274 is an active-site residue. A disulfide bridge connects residues cysteine 308 and cysteine 341.

This sequence belongs to the peptidase A1 family. In terms of assembly, monomer.

The enzyme catalyses Broad specificity similar to that of pepsin A. Clots milk by cleavage of a single 104-Ser-Phe-|-Met-Ala-107 bond in kappa-chain of casein.. Chymosin is synthesized in the mucosa of the stomach. The enzyme hydrolyzes casein to paracasein. In Ovis aries (Sheep), this protein is Chymosin (CYM).